The primary structure comprises 1056 residues: Carbamoyl phosphate synthase large chain (1056 aa).

The tract at residues 1 to 397 (MPKKSHIKKV…AFKKALRSLD (397 aa)) is carboxyphosphate synthetic domain. Residues R127, R167, G173, G174, E206, V208, E213, G239, I240, H241, Q282, and E294 each coordinate ATP. Residues 131–323 (RDLMNAIGEP…IARVAAKIAI (193 aa)) enclose the ATP-grasp 1 domain. Mg(2+) contacts are provided by Q282, E294, and N296. Residues Q282, E294, and N296 each contribute to the Mn(2+) site. Positions 398-530 (NDMQQHTNPS…YSTWEEGCEL (133 aa)) are oligomerization domain. The carbamoyl phosphate synthetic domain stretch occupies residues 531–920 (VRDSAKKVLI…YKACTAADNT (390 aa)). The 192-residue stretch at 662–853 (SRLLTRLEIP…LAKIAAKVMV (192 aa)) folds into the ATP-grasp 2 domain. Positions 698, 737, 739, 744, 769, 770, 771, 772, 812, and 824 each coordinate ATP. Mg(2+) is bound by residues Q812, E824, and N826. Mn(2+) contacts are provided by Q812, E824, and N826. In terms of domain architecture, MGS-like spans 919–1056 (NTLPTTGNVF…EPLGHYHGLM (138 aa)). An allosteric domain region spans residues 921–1056 (LPTTGNVFIS…EPLGHYHGLM (136 aa)).

This sequence belongs to the CarB family. In terms of assembly, composed of two chains; the small (or glutamine) chain promotes the hydrolysis of glutamine to ammonia, which is used by the large (or ammonia) chain to synthesize carbamoyl phosphate. Tetramer of heterodimers (alpha,beta)4. The cofactor is Mg(2+). Mn(2+) is required as a cofactor.

The catalysed reaction is hydrogencarbonate + L-glutamine + 2 ATP + H2O = carbamoyl phosphate + L-glutamate + 2 ADP + phosphate + 2 H(+). It catalyses the reaction hydrogencarbonate + NH4(+) + 2 ATP = carbamoyl phosphate + 2 ADP + phosphate + 2 H(+). It functions in the pathway amino-acid biosynthesis; L-arginine biosynthesis; carbamoyl phosphate from bicarbonate: step 1/1. Its pathway is pyrimidine metabolism; UMP biosynthesis via de novo pathway; (S)-dihydroorotate from bicarbonate: step 1/3. Large subunit of the glutamine-dependent carbamoyl phosphate synthetase (CPSase). CPSase catalyzes the formation of carbamoyl phosphate from the ammonia moiety of glutamine, carbonate, and phosphate donated by ATP, constituting the first step of 2 biosynthetic pathways, one leading to arginine and/or urea and the other to pyrimidine nucleotides. The large subunit (synthetase) binds the substrates ammonia (free or transferred from glutamine from the small subunit), hydrogencarbonate and ATP and carries out an ATP-coupled ligase reaction, activating hydrogencarbonate by forming carboxy phosphate which reacts with ammonia to form carbamoyl phosphate. In Methanoculleus marisnigri (strain ATCC 35101 / DSM 1498 / JR1), this protein is Carbamoyl phosphate synthase large chain.